The following is an 848-amino-acid chain: MTENTPGTSAPERFDPATADTRWQRVWDEKQSFRADDSSTKPRSYVLEMFPYPSGRIHIGHVRNYTMGDVLARYKRMRGFEVLHPMGWDAFGMPAENAAMEKGVHPGGWTRDNIANMKAQLKRLGFALDWSREIATCEPEYYGQEQALFLDLYAAGLVYRKESTVNWDPVDMTVLANEQVIDGRGWRSGALVEKRKLNQWFLKITDFADELLEGLSTLDKWPEKVRVMQENWIGKSQGLQFRFDLSNGETVEVYTTRPDTIFGASFVAVAPDHPIAQGVAAINCEAANFIALCKKGGTTAAELETAEKLGFDTGIGARHPLTGKYLPVYIANFVLMEYGTGAIMAVPGHDQRDFDFATKYALPILRVVAADAADADKPFAGEAEAGDGVLVNSGFLDGMNVADAKAAVIVRAESEGWGEGKTVWRLRDWGVSRQRYWGTPIPFIHCEVCGVVPVPKKHLPVTLPEDVSFDVPGNPLDRHPTWKHVDCPQCGHPARRETDTLDTFVDSSWYFLRFASQPEDRPFDPEEIKRWLPVEQYIGGIEHAILHLLYARFWTRALARIGKVEVTEPFGSLFTQGMVTHETYERRNPENGQPIFFSPGEVERTGEGATLKVDGAPVEIGRVIKMSKSKKNVVDPDEIVAKYGADAIRWFMLSDSPPERDLPWSEAGIEGCARFVQRLWRLFGQYDAAATGEDKALDRKAHQTVHAVASDIEALGFNKAVARIYELTGAVEKAAPSASRSDAIRKLLLLVAPMMPHLAEEAYARFGSSLIADAAWPEVDPALLVDDEVIVAVQVKGKLRDTLTVAKGTPKEDLERLALASEKVQRALEGAEVKKVIVVPDRLVNLVA.

Residues 1 to 21 are disordered; the sequence is MTENTPGTSAPERFDPATADT. The 'HIGH' region signature appears at 51–61; it reads PYPSGRIHIGH. The short motif at 625 to 629 is the 'KMSKS' region element; sequence KMSKS. Lys-628 serves as a coordination point for ATP.

It belongs to the class-I aminoacyl-tRNA synthetase family.

The protein localises to the cytoplasm. It catalyses the reaction tRNA(Leu) + L-leucine + ATP = L-leucyl-tRNA(Leu) + AMP + diphosphate. This Novosphingobium aromaticivorans (strain ATCC 700278 / DSM 12444 / CCUG 56034 / CIP 105152 / NBRC 16084 / F199) protein is Leucine--tRNA ligase.